Here is a 231-residue protein sequence, read N- to C-terminus: Ribose-5-phosphate isomerase A (231 aa).

Substrate-binding positions include 40 to 43, 93 to 96, and 106 to 109; these read TGST, DGAD, and KGGG. Catalysis depends on glutamate 115, which acts as the Proton acceptor. Lysine 133 is a binding site for substrate.

Belongs to the ribose 5-phosphate isomerase family. In terms of assembly, homodimer.

It catalyses the reaction aldehydo-D-ribose 5-phosphate = D-ribulose 5-phosphate. It functions in the pathway carbohydrate degradation; pentose phosphate pathway; D-ribose 5-phosphate from D-ribulose 5-phosphate (non-oxidative stage): step 1/1. Its function is as follows. Catalyzes the reversible conversion of ribose-5-phosphate to ribulose 5-phosphate. The chain is Ribose-5-phosphate isomerase A from Escherichia coli O1:K1 / APEC.